Here is an 80-residue protein sequence, read N- to C-terminus: Metallothionein-like protein type 2, MT2-4/MT2-25 (80 aa).

This sequence belongs to the metallothionein superfamily. Type 15 family.

Its function is as follows. Metallothioneins have a high content of cysteine residues that bind various heavy metals. The protein is Metallothionein-like protein type 2, MT2-4/MT2-25 of Brassica juncea (Indian mustard).